A 656-amino-acid chain; its full sequence is Histidine decarboxylase (656 aa).

Positions 84 and 197 each coordinate substrate. An N6-(pyridoxal phosphate)lysine modification is found at Lys-308. Phosphoserine; by PKA occurs at positions 343 and 362. The interval His-481–Ser-502 is disordered.

Belongs to the group II decarboxylase family. As to quaternary structure, homodimer. Requires pyridoxal 5'-phosphate as cofactor. Post-translationally, may be post-translationally processed. As to expression, brain, glandular regions of the stomach, mast cells and fetal liver.

It catalyses the reaction L-histidine + H(+) = histamine + CO2. Its pathway is amine and polyamine biosynthesis; histamine biosynthesis; histamine from L-histidine: step 1/1. Its activity is regulated as follows. Phosphorylation of brain HDC by cAMP-dependent protein kinase leads to enzyme inactivation. Catalyzes the biosynthesis of histamine from histidine. In Rattus norvegicus (Rat), this protein is Histidine decarboxylase (Hdc).